The primary structure comprises 496 residues: Alanine aminotransferase 1 (496 aa).

Position 2 is an N-acetylalanine (Ala2). Thr22 bears the Phosphothreonine mark. An N6-(pyridoxal phosphate)lysine modification is found at Lys314.

The protein belongs to the class-I pyridoxal-phosphate-dependent aminotransferase family. Alanine aminotransferase subfamily. In terms of assembly, homodimer. Pyridoxal 5'-phosphate is required as a cofactor. In terms of tissue distribution, liver, kidney, heart, and skeletal muscles. Expressed at moderate levels in the adipose tissue.

It is found in the cytoplasm. It carries out the reaction L-alanine + 2-oxoglutarate = pyruvate + L-glutamate. It functions in the pathway amino-acid degradation; L-alanine degradation via transaminase pathway; pyruvate from L-alanine: step 1/1. In terms of biological role, catalyzes the reversible transamination between alanine and 2-oxoglutarate to form pyruvate and glutamate. Participates in cellular nitrogen metabolism and also in liver gluconeogenesis starting with precursors transported from skeletal muscles. This Homo sapiens (Human) protein is Alanine aminotransferase 1 (GPT).